The following is an 878-amino-acid chain: MDQQMALTWGLCYMALVALCWGHEVTEEEETVPLKTLECYNDYTNRIICSWADTEDAQGLINMTLLYHQLDKIQSVSCELSEKLMWSECPSSHRCVPRRCVIPYTRFSNGDNDYYSFQPDRDLGIQLMVPLAQHVQPPPPKDIHISPSGDHFLLEWSVSLGDSQVSWLSSKDIEFEVAYKRLQDSWEDASSLHTSNFQVNLEPKLFLPNSIYAARVRTRLSAGSSLSGRPSRWSPEVHWDSQPGDKAQPQNLQCFFDGIQSLHCSWEVWTQTTGSVSFGLFYRPSPAAPEEKCSPVVKEPQASVYTRYRCSLPVPEPSAHSQYTVSVKHLEQGKFIMSYYHIQMEPPILNQTKNRDSYSLHWETQKIPKYIDHTFQVQYKKKSESWKDSKTENLGRVNSMDLPQLEPDTSYCARVRVKPISDYDGIWSEWSNEYTWTTDWVMPTLWIVLILVFLIFTLLLALHFGRVYGYRTYRKWKEKIPNPSKSLLFQDGGKGLWPPGSMAAFATKNPALQGPQSRLLAEQQGVSYEHLEDNNVSPLTIEDPNIIRDPPSRPDTTPAASSESTEQLPNVQVEGPIPSSRPRKQLPSFDFNGPYLGPPQSHSLPDLPGQLGSPQVGGSLKPALPGSLEYMCLPPGGQVQLVPLSQVMGQGQAMDVQCGSSLETTGSPSVEPKENPPVELSVEKQEARDNPMTLPISSGGPEGSMMASDYVTPGDPVLTLPTGPLSTSLGPSLGLPSAQSPSLCLKLPRVPSGSPALGPPGFEDYVELPPSVSQAATSPPGHPAPPVASSPTVIPGEPREEVGPASPHPEGLLVLQQVGDYCFLPGLGPGSLSPHSKPPSPSLCSETEDLDQDLSVKKFPYQPLPQAPAIQFFKSLKY.

The first 22 residues, 1-22, serve as a signal peptide directing secretion; sequence MDQQMALTWGLCYMALVALCWG. Over 23 to 440 the chain is Extracellular; sequence HEVTEEEETV…SNEYTWTTDW (418 aa). The cysteines at positions 39 and 49 are disulfide-linked. A glycan (N-linked (GlcNAc...) asparagine) is linked at asparagine 62. The cysteines at positions 78 and 95 are disulfide-linked. One can recognise a Fibronectin type-III 1 domain in the interval 139–244; it reads PPKDIHISPS…PEVHWDSQPG (106 aa). The tract at residues 223–244 is disordered; sequence GSSLSGRPSRWSPEVHWDSQPG. 2 disulfides stabilise this stretch: cysteine 254–cysteine 264 and cysteine 293–cysteine 310. The 96-residue stretch at 343–438 folds into the Fibronectin type-III 2 domain; sequence QMEPPILNQT…EWSNEYTWTT (96 aa). An N-linked (GlcNAc...) asparagine glycan is attached at asparagine 350. The WSXWS motif motif lies at 427-431; sequence WSEWS. The chain crosses the membrane as a helical span at residues 441-462; sequence VMPTLWIVLILVFLIFTLLLAL. Topologically, residues 463-878 are cytoplasmic; that stretch reads HFGRVYGYRT…AIQFFKSLKY (416 aa). Positions 476-484 match the Box 1 motif motif; it reads WKEKIPNPS. 2 disordered regions span residues 539–620 and 660–709; these read LTIE…GGSL and SSLE…MASD. The segment covering 554–570 has biased composition (polar residues); sequence PDTTPAASSESTEQLPN. Residues 671–689 show a composition bias toward basic and acidic residues; it reads EPKENPPVELSVEKQEARD. Phosphoserine is present on residues serine 752 and serine 754. Tyrosine 765 carries the phosphotyrosine modification. Disordered regions lie at residues 771–810 and 829–849; these read SVSQ…PHPE and PGSL…ETED.

It belongs to the type I cytokine receptor family. Type 4 subfamily. In terms of assembly, heterodimer of an alpha and a beta subunit.

Its subcellular location is the membrane. Its function is as follows. In mouse, there are two classes of high-affinity IL3 receptors. One contains this IL3-specific beta subunit and the other contains the beta subunit also shared by high-affinity IL5 and GM-CSF receptors. The protein is Interleukin-3 receptor class 2 subunit beta (Csf2rb2) of Mus musculus (Mouse).